A 255-amino-acid chain; its full sequence is 4-diphosphocytidyl-2-C-methyl-D-erythritol kinase (255 aa).

Lys-6 is an active-site residue. 95–105 is a binding site for ATP; the sequence is PVCAGLGGGSS. The active site involves Asp-137.

This sequence belongs to the GHMP kinase family. IspE subfamily.

It carries out the reaction 4-CDP-2-C-methyl-D-erythritol + ATP = 4-CDP-2-C-methyl-D-erythritol 2-phosphate + ADP + H(+). Its pathway is isoprenoid biosynthesis; isopentenyl diphosphate biosynthesis via DXP pathway; isopentenyl diphosphate from 1-deoxy-D-xylulose 5-phosphate: step 3/6. Catalyzes the phosphorylation of the position 2 hydroxy group of 4-diphosphocytidyl-2C-methyl-D-erythritol. The sequence is that of 4-diphosphocytidyl-2-C-methyl-D-erythritol kinase from Campylobacter jejuni subsp. jejuni serotype O:2 (strain ATCC 700819 / NCTC 11168).